Consider the following 241-residue polypeptide: 3-oxoacyl-[acyl-carrier-protein] reductase FabG (241 aa).

NADP(+) is bound by residues 13–16 (GASS), S38, 57–58 (EV), and N83. A substrate-binding site is contributed by S135. The active-site Proton acceptor is the Y148. NADP(+)-binding positions include 148-152 (YCASK) and I181.

This sequence belongs to the short-chain dehydrogenases/reductases (SDR) family. In terms of assembly, homotetramer.

It catalyses the reaction a (3R)-hydroxyacyl-[ACP] + NADP(+) = a 3-oxoacyl-[ACP] + NADPH + H(+). The protein operates within lipid metabolism; fatty acid biosynthesis. Functionally, catalyzes the NADPH-dependent reduction of beta-ketoacyl-ACP substrates to beta-hydroxyacyl-ACP products, the first reductive step in the elongation cycle of fatty acid biosynthesis. This is 3-oxoacyl-[acyl-carrier-protein] reductase FabG (fabG) from Rickettsia prowazekii (strain Madrid E).